The primary structure comprises 241 residues: Probable pectate lyase D (241 aa).

The signal sequence occupies residues 1–17; sequence MYQKSLLFSLLATSALA. A glycan (N-linked (GlcNAc...) asparagine) is linked at Asn-215. Residues 215–241 are disordered; that stretch reads NNSGDEPEEVSEGPSDACQYSEPLSSC.

Belongs to the polysaccharide lyase 3 family. Requires Ca(2+) as cofactor.

The protein resides in the secreted. It carries out the reaction Eliminative cleavage of (1-&gt;4)-alpha-D-galacturonan to give oligosaccharides with 4-deoxy-alpha-D-galact-4-enuronosyl groups at their non-reducing ends.. Functionally, pectinolytic enzyme consist of four classes of enzymes: pectin lyase, polygalacturonase, pectin methylesterase and rhamnogalacturonase. Among pectinolytic enzymes, pectin lyase is the most important in depolymerization of pectin, since it cleaves internal glycosidic bonds of highly methylated pectins. Favors pectate, the anion, over pectin, the methyl ester. In Neosartorya fischeri (strain ATCC 1020 / DSM 3700 / CBS 544.65 / FGSC A1164 / JCM 1740 / NRRL 181 / WB 181) (Aspergillus fischerianus), this protein is Probable pectate lyase D (plyD).